A 600-amino-acid polypeptide reads, in one-letter code: Elongation factor 4 (600 aa).

Residues 13-194 (DRIRNFCIIA…AIVERIPPPR (182 aa)) form the tr-type G domain. GTP contacts are provided by residues 25–30 (DHGKST) and 141–144 (NKID).

It belongs to the TRAFAC class translation factor GTPase superfamily. Classic translation factor GTPase family. LepA subfamily.

It localises to the cell membrane. It catalyses the reaction GTP + H2O = GDP + phosphate + H(+). Required for accurate and efficient protein synthesis under certain stress conditions. May act as a fidelity factor of the translation reaction, by catalyzing a one-codon backward translocation of tRNAs on improperly translocated ribosomes. Back-translocation proceeds from a post-translocation (POST) complex to a pre-translocation (PRE) complex, thus giving elongation factor G a second chance to translocate the tRNAs correctly. Binds to ribosomes in a GTP-dependent manner. This is Elongation factor 4 from Rubrobacter xylanophilus (strain DSM 9941 / JCM 11954 / NBRC 16129 / PRD-1).